The primary structure comprises 501 residues: MDLKDYVRIFDTTLRDGEQCPGAAMTENEKLEIASQLATMKVDIIEAGFPVSSPVQFQAVERIARETEGPMIAALARAMKADIEAASKALQPAKKRRIHTFIASSPIHMKYKLGKEPKEVLKMAVEAVTLCRQFVDDVEFSPEDATRSEPEFLRELCEAVIAAGATTINIPDTVGYTTPAEYGGLFKFLLSNVRGAEKIIFSAHCHNDLGLATANSLAAVQNGARQIECTINGIGERAGNTAMEEVVMAMRTRKDTFGIQTQIKTEEIARASYLVKTITGMLVQPNKAIVGANAFAHESGIHQDGVIKHRETYEIMKPETVGLSSNRMVLGRHSGRAGFKDRIVKLGFSPQVEELEAAYQRFLEIADRKKEIYDEDIRALFSEEARKSTGDRFQLEGFTVSTGTKSTPTAGVRILIDGHVREESATGDGPVDAIYKAIQKTTGMDPEVSRLVISPVTEGQDAMAEASVTLEYKGDRVVGKGSSTDIIEACSRAYISALNRL.

The 263-residue stretch at 7–269 (VRIFDTTLRD…QTQIKTEEIA (263 aa)) folds into the Pyruvate carboxyltransferase domain. Residues Asp16, His204, His206, and Asn240 each contribute to the Mn(2+) site. Positions 394-501 (QLEGFTVSTG…RAYISALNRL (108 aa)) are regulatory domain.

This sequence belongs to the alpha-IPM synthase/homocitrate synthase family. LeuA type 1 subfamily. Homodimer. Requires Mn(2+) as cofactor.

Its subcellular location is the cytoplasm. The enzyme catalyses 3-methyl-2-oxobutanoate + acetyl-CoA + H2O = (2S)-2-isopropylmalate + CoA + H(+). It participates in amino-acid biosynthesis; L-leucine biosynthesis; L-leucine from 3-methyl-2-oxobutanoate: step 1/4. In terms of biological role, catalyzes the condensation of the acetyl group of acetyl-CoA with 3-methyl-2-oxobutanoate (2-ketoisovalerate) to form 3-carboxy-3-hydroxy-4-methylpentanoate (2-isopropylmalate). This chain is 2-isopropylmalate synthase, found in Leptospira interrogans serogroup Icterohaemorrhagiae serovar copenhageni (strain Fiocruz L1-130).